A 495-amino-acid chain; its full sequence is ATP synthase subunit beta, chloroplastic (495 aa).

172–179 is an ATP binding site; sequence GGAGVGKT.

This sequence belongs to the ATPase alpha/beta chains family. F-type ATPases have 2 components, CF(1) - the catalytic core - and CF(0) - the membrane proton channel. CF(1) has five subunits: alpha(3), beta(3), gamma(1), delta(1), epsilon(1). CF(0) has four main subunits: a(1), b(1), b'(1) and c(9-12).

The protein resides in the plastid. It is found in the chloroplast thylakoid membrane. The enzyme catalyses ATP + H2O + 4 H(+)(in) = ADP + phosphate + 5 H(+)(out). Its function is as follows. Produces ATP from ADP in the presence of a proton gradient across the membrane. The catalytic sites are hosted primarily by the beta subunits. The chain is ATP synthase subunit beta, chloroplastic from Hyacinthus orientalis (Common hyacinth).